We begin with the raw amino-acid sequence, 215 residues long: Probable GTP-binding protein EngB (215 aa).

Positions 30–204 (TGIEVAFAGR…RQKLDTWFSE (175 aa)) constitute an EngB-type G domain. GTP contacts are provided by residues 38–45 (GRSNAGKS), 65–69 (GRTQL), 83–86 (DLPG), 150–153 (TKAD), and 183–185 (FSS). Mg(2+) contacts are provided by Ser-45 and Thr-67.

Belongs to the TRAFAC class TrmE-Era-EngA-EngB-Septin-like GTPase superfamily. EngB GTPase family. Mg(2+) is required as a cofactor.

In terms of biological role, necessary for normal cell division and for the maintenance of normal septation. The sequence is that of Probable GTP-binding protein EngB from Escherichia coli O1:K1 / APEC.